The following is a 246-amino-acid chain: 5-oxoprolinase subunit A (246 aa).

This sequence belongs to the LamB/PxpA family. Forms a complex composed of PxpA, PxpB and PxpC.

The catalysed reaction is 5-oxo-L-proline + ATP + 2 H2O = L-glutamate + ADP + phosphate + H(+). Its function is as follows. Catalyzes the cleavage of 5-oxoproline to form L-glutamate coupled to the hydrolysis of ATP to ADP and inorganic phosphate. The chain is 5-oxoprolinase subunit A from Vibrio cholerae serotype O1 (strain M66-2).